The primary structure comprises 189 residues: Protein GrpE (189 aa).

Residues 1–22 (MKEQQKETEQNIEEINDETVTE) are disordered. Acidic residues predominate over residues 10-22 (QNIEEINDETVTE).

It belongs to the GrpE family. In terms of assembly, homodimer.

Its subcellular location is the cytoplasm. Its function is as follows. Participates actively in the response to hyperosmotic and heat shock by preventing the aggregation of stress-denatured proteins, in association with DnaK and GrpE. It is the nucleotide exchange factor for DnaK and may function as a thermosensor. Unfolded proteins bind initially to DnaJ; upon interaction with the DnaJ-bound protein, DnaK hydrolyzes its bound ATP, resulting in the formation of a stable complex. GrpE releases ADP from DnaK; ATP binding to DnaK triggers the release of the substrate protein, thus completing the reaction cycle. Several rounds of ATP-dependent interactions between DnaJ, DnaK and GrpE are required for fully efficient folding. The polypeptide is Protein GrpE (Leuconostoc citreum (strain KM20)).